Consider the following 257-residue polypeptide: 5'-nucleotidase SurE (257 aa).

A divalent metal cation contacts are provided by aspartate 13, aspartate 14, serine 44, and asparagine 100.

The protein belongs to the SurE nucleotidase family. A divalent metal cation is required as a cofactor.

The protein resides in the cytoplasm. It carries out the reaction a ribonucleoside 5'-phosphate + H2O = a ribonucleoside + phosphate. Nucleotidase that shows phosphatase activity on nucleoside 5'-monophosphates. In Phocaeicola vulgatus (strain ATCC 8482 / DSM 1447 / JCM 5826 / CCUG 4940 / NBRC 14291 / NCTC 11154) (Bacteroides vulgatus), this protein is 5'-nucleotidase SurE.